The chain runs to 167 residues: Photosystem I assembly protein Ycf3 (167 aa).

3 TPR repeats span residues Ala-35–Pro-68, Ser-72–Leu-105, and Gly-120–Asn-153.

This sequence belongs to the Ycf3 family.

It is found in the plastid. Its subcellular location is the chloroplast thylakoid membrane. Its function is as follows. Essential for the assembly of the photosystem I (PSI) complex. May act as a chaperone-like factor to guide the assembly of the PSI subunits. In Marchantia polymorpha (Common liverwort), this protein is Photosystem I assembly protein Ycf3.